The chain runs to 396 residues: Imidazolonepropionase (396 aa).

Histidine 70 and histidine 72 together coordinate Fe(3+). 2 residues coordinate Zn(2+): histidine 70 and histidine 72. Residues arginine 79, tyrosine 137, and histidine 164 each contribute to the 4-imidazolone-5-propanoate site. Tyrosine 137 is a binding site for N-formimidoyl-L-glutamate. Histidine 227 is a binding site for Fe(3+). Histidine 227 lines the Zn(2+) pocket. Glutamine 230 lines the 4-imidazolone-5-propanoate pocket. Residue aspartate 301 coordinates Fe(3+). Aspartate 301 contacts Zn(2+). Residues asparagine 303 and glycine 305 each coordinate N-formimidoyl-L-glutamate. Residue serine 306 coordinates 4-imidazolone-5-propanoate.

It belongs to the metallo-dependent hydrolases superfamily. HutI family. It depends on Zn(2+) as a cofactor. Requires Fe(3+) as cofactor.

It localises to the cytoplasm. The catalysed reaction is 4-imidazolone-5-propanoate + H2O = N-formimidoyl-L-glutamate. It participates in amino-acid degradation; L-histidine degradation into L-glutamate; N-formimidoyl-L-glutamate from L-histidine: step 3/3. In terms of biological role, catalyzes the hydrolytic cleavage of the carbon-nitrogen bond in imidazolone-5-propanoate to yield N-formimidoyl-L-glutamate. It is the third step in the universal histidine degradation pathway. This is Imidazolonepropionase from Mycolicibacterium smegmatis (strain ATCC 700084 / mc(2)155) (Mycobacterium smegmatis).